The sequence spans 625 residues: tRNA uridine 5-carboxymethylaminomethyl modification enzyme MnmG (625 aa).

FAD contacts are provided by residues 9–14, Val-121, and Ser-176; that span reads GGGHAG. 270-284 is an NAD(+) binding site; that stretch reads GPRYCPSIEDKIYRF. Gln-367 serves as a coordination point for FAD.

It belongs to the MnmG family. In terms of assembly, homodimer. Heterotetramer of two MnmE and two MnmG subunits. It depends on FAD as a cofactor.

It is found in the cytoplasm. Functionally, NAD-binding protein involved in the addition of a carboxymethylaminomethyl (cmnm) group at the wobble position (U34) of certain tRNAs, forming tRNA-cmnm(5)s(2)U34. This Nitratiruptor sp. (strain SB155-2) protein is tRNA uridine 5-carboxymethylaminomethyl modification enzyme MnmG.